Here is a 398-residue protein sequence, read N- to C-terminus: Elongation factor Tu (398 aa).

The 198-residue stretch at 10 to 207 (KPHVNIGTIG…TVDSYIPEPE (198 aa)) folds into the tr-type G domain. A G1 region spans residues 19 to 26 (GHVDHGKT). A GTP-binding site is contributed by 19-26 (GHVDHGKT). Residue Thr-26 coordinates Mg(2+). The tract at residues 63 to 67 (GITIN) is G2. The segment at 84-87 (DAPG) is G3. Residues 84 to 88 (DAPGH) and 139 to 142 (NKVD) contribute to the GTP site. The interval 139 to 142 (NKVD) is G4. The segment at 177-179 (SAL) is G5.

It belongs to the TRAFAC class translation factor GTPase superfamily. Classic translation factor GTPase family. EF-Tu/EF-1A subfamily. Monomer.

The protein resides in the cytoplasm. The catalysed reaction is GTP + H2O = GDP + phosphate + H(+). In terms of biological role, GTP hydrolase that promotes the GTP-dependent binding of aminoacyl-tRNA to the A-site of ribosomes during protein biosynthesis. The protein is Elongation factor Tu of Streptococcus equi subsp. zooepidemicus (strain MGCS10565).